Reading from the N-terminus, the 308-residue chain is HTH-type transcriptional activator AllS (308 aa).

Residues Phe-2–Thr-59 form the HTH lysR-type domain. The H-T-H motif DNA-binding region spans Phe-19–Lys-38.

This sequence belongs to the LysR transcriptional regulatory family.

Positive regulator essential for the expression of allD operon. Binds to the allD promoter. The chain is HTH-type transcriptional activator AllS (allS) from Escherichia coli O1:K1 / APEC.